The sequence spans 284 residues: Deoxyribonuclease-1 (284 aa).

The N-terminal stretch at 1 to 22 is a signal peptide; that stretch reads MRAARLMGALLALAGLLQLALS. A glycan (N-linked (GlcNAc...) asparagine) is linked at N40. E100 is a catalytic residue. Cysteines 123 and 126 form a disulfide. A glycan (N-linked (GlcNAc...) asparagine) is linked at N128. Residue H156 is part of the active site. A disulfide bridge connects residues C195 and C231.

This sequence belongs to the DNase I family. Requires Ca(2+) as cofactor. The cofactor is Mg(2+).

It is found in the secreted. Its subcellular location is the zymogen granule. The protein localises to the nucleus envelope. The enzyme catalyses Endonucleolytic cleavage to 5'-phosphodinucleotide and 5'-phosphooligonucleotide end-products.. Functionally, serum endocuclease secreted into body fluids by a wide variety of exocrine and endocrine organs. Expressed by non-hematopoietic tissues and preferentially cleaves protein-free DNA. Among other functions, seems to be involved in cell death by apoptosis. Binds specifically to G-actin and blocks actin polymerization. Together with DNASE1L3, plays a key role in degrading neutrophil extracellular traps (NETs). NETs are mainly composed of DNA fibers and are released by neutrophils to bind pathogens during inflammation. Degradation of intravascular NETs by DNASE1 and DNASE1L3 is required to prevent formation of clots that obstruct blood vessels and cause organ damage following inflammation. In Sus scrofa (Pig), this protein is Deoxyribonuclease-1 (DNASE1).